The following is a 418-amino-acid chain: Putative competence-damage inducible protein (418 aa).

It belongs to the CinA family.

This Streptococcus pneumoniae (strain 70585) protein is Putative competence-damage inducible protein.